Consider the following 181-residue polypeptide: MLIYKDIFTDDELSSDSFPMKLVDDLVYEFKGKHVVRKEGEIVLAGSNPSAEEGAEDDGSDEHVERGIDIVLNHKLVEMNCYEDASMFKAYIKKFMKNVIDHMEKNNRDKADVDAFKKKIQGWVVSLLAKDRFKNLAFFIGERAAEGAENGQVAIIEYRDVDGTEVPTLMLVKEAIIEEKC.

Residues M1–C181 enclose the TCTP domain.

The protein belongs to the TCTP family.

It is found in the cytoplasm. In terms of biological role, involved in calcium binding and microtubule stabilization. The chain is Translationally-controlled tumor protein homolog (tct-1) from Caenorhabditis elegans.